Here is a 344-residue protein sequence, read N- to C-terminus: MKIGFVGATGYGGTELVRILSHHPHAEECILYQTSGEGNVYSEGYPHLTGLADLKPIDMNTIKHEIDIMFLAAPPGVSSELTPKLADAWVTVIDLSGDLRIKEPAEYEKWYKRTAAPKAVIQEAVYGLAELNQLAIQQAKLIANPGCFPTAVLLGLAPLAKKKLLDESFVIVDAKTGVSGAGRKASMGTHFSELNDNFKIYKVNEHQHTPEIEQALNEWQPGLGPITFSAHLVPMTRGIMATMYTRLTCDLTADDLHDLYSEFYQDSYFVRVRPKGQYPQTKEVYGSNFCDIGVTLDERTNRVTIVSVIDNLMKGAAGQAVQNFNLMNGWDEETGLTIITPIYA.

Cysteine 147 is an active-site residue.

Belongs to the NAGSA dehydrogenase family. Type 1 subfamily.

The protein resides in the cytoplasm. The enzyme catalyses N-acetyl-L-glutamate 5-semialdehyde + phosphate + NADP(+) = N-acetyl-L-glutamyl 5-phosphate + NADPH + H(+). It functions in the pathway amino-acid biosynthesis; L-arginine biosynthesis; N(2)-acetyl-L-ornithine from L-glutamate: step 3/4. Its function is as follows. Catalyzes the NADPH-dependent reduction of N-acetyl-5-glutamyl phosphate to yield N-acetyl-L-glutamate 5-semialdehyde. In Bacillus amyloliquefaciens (Bacillus velezensis), this protein is N-acetyl-gamma-glutamyl-phosphate reductase.